Consider the following 529-residue polypeptide: Hyaluronidase PH-20 (529 aa).

A signal peptide spans 1–35 (MGAFTFKHSFFGSFVECSGVLQTVFIFLLIPCCLA). Intrachain disulfides connect Cys-59/Cys-351 and Cys-223/Cys-237. An N-linked (GlcNAc...) asparagine glycan is attached at Asn-81. Glu-147 functions as the Proton donor in the catalytic mechanism. N-linked (GlcNAc...) asparagine glycans are attached at residues Asn-165 and Asn-179. N-linked (GlcNAc...) asparagine glycans are attached at residues Asn-253 and Asn-368. 3 disulfides stabilise this stretch: Cys-376-Cys-387, Cys-381-Cys-435, and Cys-437-Cys-464. The N-linked (GlcNAc...) asparagine glycan is linked to Asn-401. Residues 478 to 502 (DEPPITDDTSQNQDSISDITSSAPP) are disordered. Positions 487–502 (SQNQDSISDITSSAPP) are enriched in polar residues. Ser-492 carries GPI-anchor amidated serine lipidation. A propeptide spans 493 to 529 (ISDITSSAPPSSHILPKDLSWCLFLLSIFSQHWKYLL) (removed in mature form).

This sequence belongs to the glycosyl hydrolase 56 family. Endoproteolysis (toward the C-terminus producing two disulfide-linked fragments) could activate PH-20. In terms of tissue distribution, testis.

The protein resides in the cell membrane. The enzyme catalyses Random hydrolysis of (1-&gt;4)-linkages between N-acetyl-beta-D-glucosamine and D-glucuronate residues in hyaluronate.. Involved in sperm-egg adhesion. Upon fertilization sperm must first penetrate a layer of cumulus cells that surrounds the egg before reaching the zona pellucida. The cumulus cells are embedded in a matrix containing hyaluronic acid which is formed prior to ovulation. This protein aids in penetrating the layer of cumulus cells by digesting hyaluronic acid. The polypeptide is Hyaluronidase PH-20 (SPAM1) (Cavia porcellus (Guinea pig)).